We begin with the raw amino-acid sequence, 115 residues long: UPF0145 protein lp_2083 (115 aa).

The protein belongs to the UPF0145 family.

This is UPF0145 protein lp_2083 from Lactiplantibacillus plantarum (strain ATCC BAA-793 / NCIMB 8826 / WCFS1) (Lactobacillus plantarum).